Here is a 513-residue protein sequence, read N- to C-terminus: Maturase K (513 aa).

This sequence belongs to the intron maturase 2 family. MatK subfamily.

The protein localises to the plastid. The protein resides in the chloroplast. Functionally, usually encoded in the trnK tRNA gene intron. Probably assists in splicing its own and other chloroplast group II introns. This is Maturase K from Pinus parviflora (Japanese white pine).